A 247-amino-acid polypeptide reads, in one-letter code: uncharacterized protein (247 aa).

This is an uncharacterized protein from Acanthamoeba polyphaga (Amoeba).